A 718-amino-acid polypeptide reads, in one-letter code: SANT and BTB domain regulator of class switch recombination (718 aa).

The region spanning 21–59 is the SANT domain; it reads DMILYPLIGIPQTINWETIARLVPGLTPKECAKRFDELK. Residues 118 to 134 are compositionally biased toward polar residues; it reads ASTRNCSSESENCTTHN. Residues 118-142 are disordered; it reads ASTRNCSSESENCTTHNGGEMTEES. A BTB domain is found at 147–255; it reads MVIHVCDEAK…QCIQYCHKNM (109 aa). The segment covering 555–576 has biased composition (acidic residues); sequence SEEEEYTTGSEVTEDEVGDEEE. 2 disordered regions span residues 555–622 and 692–718; these read SEEE…SPFV and SVPVSARQSSSEKNTRSKSRFGQGRPA. The segment covering 580–595 has biased composition (basic residues); sequence KQRKKEKPKKFTRQPK. The segment covering 604 to 615 has biased composition (basic and acidic residues); the sequence is QRKEKALEKSAS.

This sequence belongs to the KIAA1841 family. In terms of assembly, homodimer. Interacts (via the BTB domain) with HDAC1 and NCOR2.

Its function is as follows. Negatively regulates class switch recombination or isotype switching in splenic B-cells. In Homo sapiens (Human), this protein is SANT and BTB domain regulator of class switch recombination.